The primary structure comprises 157 residues: uncharacterized protein (157 aa).

The N-acetyltransferase domain occupies 9–154 (LLINYKTLDE…ETNLNAVTNE (146 aa)).

This is an uncharacterized protein from Bacillus cereus (strain ATCC 14579 / DSM 31 / CCUG 7414 / JCM 2152 / NBRC 15305 / NCIMB 9373 / NCTC 2599 / NRRL B-3711).